A 160-amino-acid polypeptide reads, in one-letter code: Transcriptional repressor NrdR (160 aa).

Over residues Met1–Thr11 the composition is skewed to polar residues. Residues Met1 to Glu20 form a disordered region. A zinc finger spans residues Cys3–Cys34. An ATP-cone domain is found at Leu49–Asp139.

Belongs to the NrdR family. The cofactor is Zn(2+).

Its function is as follows. Negatively regulates transcription of bacterial ribonucleotide reductase nrd genes and operons by binding to NrdR-boxes. This chain is Transcriptional repressor NrdR, found in Rhodopseudomonas palustris (strain BisA53).